Reading from the N-terminus, the 557-residue chain is MLGYLLAGIAIGPWGLGFISDVDEILHFSELGVVFLMFIIGLELNPSKLWQLRRSIFGVGAAQVLLSAALLAGLLMLTDFAWQAAVVGGIGFAMSSTAMALQLMREKGMNRSESGQLGFSVLLFQDLAVIPALALVPLLAGSADEHFDWMKIGMKVLEFVGMLIGGRYLLRPVFRFIAASGVREVFTAATLLLVLGSALFMDALGLSMALGTFIAGVLLAESEYRHELETAIDPFKGLLLGLFFISVGMSLNLGVLYTHLLWVVISVVVLVAVKILVLYLLARLYGVRSSERMQFAGVLSQGGEFAFVLFSTASSQRLFQGDQMAPLLMKLVDKWLSRQFNGPEEEDEKPWVNDDKPQVIVVGFGRFGQVIGRLLMANKMRITVLERDISAVNLMRKYGYKVYYGDATQVDLLRSAGAEAAESIVITCNEPEDTMKLVEICQQHFPHLHILARARGRVEAHELLQAGVTQFSRETFSSALELGRKTLVTLGMHPHQAQRAQLHFRRLDMRMLRELIPMHADTVQISRAREARRELEEIFQREMQQERRQLDGWDEFE.

10 consecutive transmembrane segments (helical) span residues 2–22 (LGYL…ISDV), 24–44 (EILH…GLEL), 56–76 (IFGV…GLLM), 84–104 (AAVV…LQLM), 121–141 (VLLF…LLAG), 146–166 (HFDW…LIGG), 176–196 (FIAA…LVLG), 199–219 (LFMD…GVLL), 237–257 (GLLL…GVLY), and 260–280 (LLWV…VLYL). The RCK N-terminal domain maps to 356-475 (KPQVIVVGFG…AGVTQFSRET (120 aa)).

Belongs to the monovalent cation:proton antiporter 2 (CPA2) transporter (TC 2.A.37) family. KefB subfamily. Interacts with the regulatory subunit KefG.

It is found in the cell inner membrane. Functionally, pore-forming subunit of a potassium efflux system that confers protection against electrophiles. Catalyzes K(+)/H(+) antiport. The polypeptide is Putative glutathione-regulated potassium-efflux system protein KefB (Shigella flexneri).